Here is a 523-residue protein sequence, read N- to C-terminus: DNA-(apurinic or apyrimidinic site) endonuclease 2 (523 aa).

Glu42 serves as a coordination point for Mg(2+). The active site involves Tyr151. 3 residues coordinate Mg(2+): Asp191, Asn193, and Asp294. The Proton donor/acceptor role is filled by Asp191. A disordered region spans residues 348–392; it reads MKKNKNNSPTQSENVSASASSGSSPTVSRANSVIDVDAYPPEKRR. Polar residues predominate over residues 353-362; sequence NNSPTQSENV. Residues Cys458, His461, Cys484, and Cys508 each coordinate Zn(2+). A GRF-type zinc finger spans residues 458–517; sequence CEGHKEPCKYLTVRKPGINYGRKFWICARPVGELIKNSNAVSEEDTQPFQCRFFIWDSDW.

It belongs to the DNA repair enzymes AP/ExoA family. Mg(2+) serves as cofactor. It depends on Mn(2+) as a cofactor.

Its subcellular location is the nucleus. The enzyme catalyses Exonucleolytic cleavage in the 3'- to 5'-direction to yield nucleoside 5'-phosphates.. DNA repair enzyme that cleaves apurinic/apyrimidinic (AP) sites and removes 3'-blocking groups present at single strand breaks of damaged DNA. Provides the majority of the AP-endonuclease (APE) activity. Repairs phleomycin D1-induced DNA damage. Plays a role in oxidative damage repair. This Schizosaccharomyces pombe (strain 972 / ATCC 24843) (Fission yeast) protein is DNA-(apurinic or apyrimidinic site) endonuclease 2 (apn2).